We begin with the raw amino-acid sequence, 145 residues long: Deoxyuridine 5'-triphosphate nucleotidohydrolase (145 aa).

Residues 62 to 64 (RSG), Asn-75, 79 to 81 (TVD), and Lys-89 contribute to the substrate site.

This sequence belongs to the dUTPase family. Requires Mg(2+) as cofactor.

The enzyme catalyses dUTP + H2O = dUMP + diphosphate + H(+). It functions in the pathway pyrimidine metabolism; dUMP biosynthesis; dUMP from dCTP (dUTP route): step 2/2. Its function is as follows. This enzyme is involved in nucleotide metabolism: it produces dUMP, the immediate precursor of thymidine nucleotides and it decreases the intracellular concentration of dUTP so that uracil cannot be incorporated into DNA. The sequence is that of Deoxyuridine 5'-triphosphate nucleotidohydrolase from Helicobacter pylori (strain P12).